A 1495-amino-acid chain; its full sequence is ABC transporter C family member 12 (1495 aa).

The next 11 membrane-spanning stretches (helical) occupy residues 38–58, 76–96, 110–130, 146–166, 173–195, 303–323, 337–357, 420–440, 441–461, 528–548, and 558–578; these read VMLVSHFVLLGLCFYRIWIIF, VLGLLACYCVVEPVLRLVMGI, FEVASLMVEAFAWFSMLVLIG, FGVLYVLVADAVLLDLVLPLK, ALYLFISSRCSQALFGILLLIYI, FWLAGIFKIGNDLSQFVGPVI, AWVGYVYAFIIFVGVTLGVLC, GLWSAPFRIIVSMILLYQQLG, VASLFGSLILFLLIPLQTLII, FILNSIPVVVTVVSFGVFVLL, and FTSLSLFAVLRFPLNMLPNLL. The ABC transmembrane type-1 1 domain maps to 303 to 583; the sequence is FWLAGIFKIG…LPNLLSQVVN (281 aa). Positions 615-839 constitute an ABC transporter 1 domain; the sequence is ISIKNGYFSW…GILFKKLMEN (225 aa). 650–657 provides a ligand contact to ATP; sequence GGTGEGKT. Helical transmembrane passes span 907-927, 949-969, 1042-1062, 1140-1160, and 1166-1186; these read AVGGLWVVMILLACYLATEVL, PGFYIVVYALLGFGQVAVTFT, FALIGTVSTISLWAIMPLLIL, LETLGGVMIWLTATFAVLQNG, and AGFASTMGLLLSYTLNITSLL. One can recognise an ABC transmembrane type-1 2 domain in the interval 914-1198; the sequence is VMILLACYLA…VLRQASRAEN (285 aa). Residues 1235–1469 enclose the ABC transporter 2 domain; the sequence is IKFEDVHLRY…DTSAFFRMVH (235 aa). An ATP-binding site is contributed by 1269–1276; it reads GRTGAGKS.

The protein belongs to the ABC transporter superfamily. ABCC family. Conjugate transporter (TC 3.A.1.208) subfamily. As to expression, ubiquitous.

It localises to the membrane. The enzyme catalyses ATP + H2O + xenobioticSide 1 = ADP + phosphate + xenobioticSide 2.. Functionally, pump for glutathione S-conjugates. This Arabidopsis thaliana (Mouse-ear cress) protein is ABC transporter C family member 12 (ABCC12).